A 188-amino-acid chain; its full sequence is MAVANSSPVNPVVFFDVSIGGQEVGRMKIELFADVVPKTAENFRQFCTGEFRKDGVPIGYKGSTFHRVIKDFMIQGGDFVNGDGTGVASIYRGPFADENFKLRHSAPGLLSMANSGPSTNGCQFFITCSKCDWLDGKHVVFGKIIDGLLVMRKIEFQAPLGKRVQAWTHSLTCPALTGILALILMPTE.

Ala2 is modified (N-acetylalanine). Positions 14-176 constitute a PPIase cyclophilin-type domain; that stretch reads FFDVSIGGQE…WTHSLTCPAL (163 aa).

The protein belongs to the cyclophilin-type PPIase family. PPIase H subfamily. Interacts directly with PRPF4. Part of a heteromeric complex containing PPIH, PRPF3 and PRPF4 that is stable in the absence of RNA. Component of the U4/U6-U5 tri-snRNP complex composed of the U4, U6 and U5 snRNAs and at least PRPF3, PRPF4, PRPF6, PRPF8, PRPF31, SNRNP200, TXNL4A, SNRNP40, DDX23, CD2BP2, PPIH, SNU13, EFTUD2, SART1 and USP39. Heterodimer with PRPF18. Heterodimer with PRPF18.

The protein localises to the nucleus speckle. It is found in the cytoplasm. It carries out the reaction [protein]-peptidylproline (omega=180) = [protein]-peptidylproline (omega=0). Its activity is regulated as follows. Inhibited by cyclosporin A. Functionally, PPIase that catalyzes the cis-trans isomerization of proline imidic peptide bonds in oligopeptides and may therefore assist protein folding. Participates in pre-mRNA splicing. May play a role in the assembly of the U4/U5/U6 tri-snRNP complex, one of the building blocks of the spliceosome. May act as a chaperone. This Mus musculus (Mouse) protein is Peptidyl-prolyl cis-trans isomerase H (Ppih).